The primary structure comprises 782 residues: Polyribonucleotide nucleotidyltransferase (782 aa).

The Mg(2+) site is built by Asp-514 and Asp-520. The region spanning 580–639 (PRIITIKIPVDQIGAVIGPKGKIINQIQDDTGAEITIEDDGTIYIGATEGTAAEAARAAI) is the KH domain. The 73-residue stretch at 651 to 723 (GERYLGTVVK…ARGKLSLVPV (73 aa)) folds into the S1 motif domain. Residues 734–753 (AGAGESAASGGAPRSAGGPQ) show a composition bias toward low complexity. Residues 734 to 782 (AGAGESAASGGAPRSAGGPQPREHQGPGRPRGRGGDHGGEGRQRTRRRH) are disordered. The segment covering 766-776 (RGGDHGGEGRQ) has biased composition (basic and acidic residues).

Belongs to the polyribonucleotide nucleotidyltransferase family. Mg(2+) is required as a cofactor.

The protein resides in the cytoplasm. It catalyses the reaction RNA(n+1) + phosphate = RNA(n) + a ribonucleoside 5'-diphosphate. Involved in mRNA degradation. Catalyzes the phosphorolysis of single-stranded polyribonucleotides processively in the 3'- to 5'-direction. This is Polyribonucleotide nucleotidyltransferase from Acidothermus cellulolyticus (strain ATCC 43068 / DSM 8971 / 11B).